The chain runs to 89 residues: Small ribosomal subunit protein uS17 (89 aa).

It belongs to the universal ribosomal protein uS17 family. In terms of assembly, part of the 30S ribosomal subunit.

In terms of biological role, one of the primary rRNA binding proteins, it binds specifically to the 5'-end of 16S ribosomal RNA. This is Small ribosomal subunit protein uS17 from Paracidovorax citrulli (strain AAC00-1) (Acidovorax citrulli).